A 185-amino-acid polypeptide reads, in one-letter code: HTH-type transcriptional regulator SAR2658 (185 aa).

The 61-residue stretch at 6 to 66 (KENRQRIEEI…YVIQRDLDIF (61 aa)) folds into the HTH tetR-type domain. A DNA-binding region (H-T-H motif) is located at residues 29–48 (SMNRIAKELGIGMGTLYRHF).

In Staphylococcus aureus (strain MRSA252), this protein is HTH-type transcriptional regulator SAR2658.